A 261-amino-acid polypeptide reads, in one-letter code: Cytochrome c oxidase subunit 3 (261 aa).

The Mitochondrial matrix segment spans residues 1–15 (MTHQTHAYHMVNPSP). Residues 16-34 (WPLTGALSALLMTSGLIMW) traverse the membrane as a helical segment. Residues 35-40 (FHFNSV) are Mitochondrial intermembrane-facing. A helical transmembrane segment spans residues 41–66 (ALLMLGLTTNMLTMYQWWRDVIREST). Residues 67–72 (FQGHHT) are Mitochondrial matrix-facing. A helical transmembrane segment spans residues 73–105 (PNVQKGLRYGMILFIISEVLFFTGFFWAFYHSS). At 106–128 (LAPTPELGGCWPPTGIHPLNPLE) the chain is on the mitochondrial intermembrane side. Residues 129–152 (VPLLNTSVLLASGVSITWAHHSLM) form a helical membrane-spanning segment. Topologically, residues 153–155 (EGN) are mitochondrial matrix. The chain crosses the membrane as a helical span at residues 156–183 (RNHMLQALFITIALGVYFTLLQASEYYE). At 184 to 190 (APFTISD) the chain is on the mitochondrial intermembrane side. The helical transmembrane segment at 191 to 223 (GVYGSTFFVATGFHGLHVIIGSTFLIVCFFRQL) threads the bilayer. The Mitochondrial matrix segment spans residues 224–232 (KFHFTSSHH). Residues 233–256 (FGFEAAAWYWHFVDVVWLFLYVSI) form a helical membrane-spanning segment. Topologically, residues 257-261 (YWWGS) are mitochondrial intermembrane.

This sequence belongs to the cytochrome c oxidase subunit 3 family. Component of the cytochrome c oxidase (complex IV, CIV), a multisubunit enzyme composed of 14 subunits. The complex is composed of a catalytic core of 3 subunits MT-CO1, MT-CO2 and MT-CO3, encoded in the mitochondrial DNA, and 11 supernumerary subunits COX4I, COX5A, COX5B, COX6A, COX6B, COX6C, COX7A, COX7B, COX7C, COX8 and NDUFA4, which are encoded in the nuclear genome. The complex exists as a monomer or a dimer and forms supercomplexes (SCs) in the inner mitochondrial membrane with NADH-ubiquinone oxidoreductase (complex I, CI) and ubiquinol-cytochrome c oxidoreductase (cytochrome b-c1 complex, complex III, CIII), resulting in different assemblies (supercomplex SCI(1)III(2)IV(1) and megacomplex MCI(2)III(2)IV(2)).

Its subcellular location is the mitochondrion inner membrane. The catalysed reaction is 4 Fe(II)-[cytochrome c] + O2 + 8 H(+)(in) = 4 Fe(III)-[cytochrome c] + 2 H2O + 4 H(+)(out). Functionally, component of the cytochrome c oxidase, the last enzyme in the mitochondrial electron transport chain which drives oxidative phosphorylation. The respiratory chain contains 3 multisubunit complexes succinate dehydrogenase (complex II, CII), ubiquinol-cytochrome c oxidoreductase (cytochrome b-c1 complex, complex III, CIII) and cytochrome c oxidase (complex IV, CIV), that cooperate to transfer electrons derived from NADH and succinate to molecular oxygen, creating an electrochemical gradient over the inner membrane that drives transmembrane transport and the ATP synthase. Cytochrome c oxidase is the component of the respiratory chain that catalyzes the reduction of oxygen to water. Electrons originating from reduced cytochrome c in the intermembrane space (IMS) are transferred via the dinuclear copper A center (CU(A)) of subunit 2 and heme A of subunit 1 to the active site in subunit 1, a binuclear center (BNC) formed by heme A3 and copper B (CU(B)). The BNC reduces molecular oxygen to 2 water molecules using 4 electrons from cytochrome c in the IMS and 4 protons from the mitochondrial matrix. In Nanger granti (Grant's gazelle), this protein is Cytochrome c oxidase subunit 3 (MT-CO3).